The chain runs to 228 residues: Cytochrome b5 domain-containing protein 1 (228 aa).

Residues 17–83 (RRYFTPSEVA…DPQTRDIRKH (67 aa)) enclose the Cytochrome b5 heme-binding domain. H83 is a heme binding site.

This sequence belongs to the cytochrome b5 family.

The protein resides in the cytoplasm. The protein localises to the cytoskeleton. Its subcellular location is the cilium axoneme. Radial spoke stalk protein that binds heme under oxidizing conditions. Required for the coordinated beating of multiple cilia maybe by functioning in a redox signaling pathway. This Mus musculus (Mouse) protein is Cytochrome b5 domain-containing protein 1 (Cyb5d1).